The chain runs to 314 residues: Acetaldehyde dehydrogenase 2 (314 aa).

NAD(+) is bound at residue 15–18; the sequence is SGNI. Cys133 serves as the catalytic Acyl-thioester intermediate. Residues 164 to 172 and Asn291 contribute to the NAD(+) site; that span reads SAGPGTRAN.

The protein belongs to the acetaldehyde dehydrogenase family.

It carries out the reaction acetaldehyde + NAD(+) + CoA = acetyl-CoA + NADH + H(+). The protein is Acetaldehyde dehydrogenase 2 of Pseudomonas putida (strain ATCC 700007 / DSM 6899 / JCM 31910 / BCRC 17059 / LMG 24140 / F1).